The following is a 221-amino-acid chain: Membrane protein 0 (221 aa).

Positions 1 to 22 (MATVHYSRRPGTPPVTLTSSPG) are disordered. A PPXY motif motif is present at residues 44-47 (PPPY). The helical transmembrane segment at 100–120 (FLILFGILTLTAVVVAIVAVF) threads the bilayer.

It belongs to the varicellovirus ORF0 protein family. As to quaternary structure, interacts with host ITCH; this interaction probably mediates ITCH degradation.

Its subcellular location is the host Golgi apparatus membrane. In Homo sapiens (Human), this protein is Membrane protein 0.